Reading from the N-terminus, the 358-residue chain is Mesaconyl-CoA hydratase (358 aa).

It belongs to the enoyl-CoA hydratase/isomerase family. As to quaternary structure, homodimer.

The enzyme catalyses (2R,3S)-beta-methylmalyl-CoA = 2-methylfumaryl-CoA + H2O. Its activity is regulated as follows. Shows highest activity at 0.5 M KCl. Does not require divalent ions for activity. Functionally, involved in the methylaspartate cycle. Catalyzes the reversible hydration of mesaconyl-CoA (2-methylfumaryl-CoA) to yield beta-methylmalyl-CoA ((2R,3S)-beta-methylmalyl-CoA). Also shows activity with mesaconyl-C4-CoA (3-methylfumaryl-CoA), (S)-citramalyl-CoA and (S)-malyl-CoA. The protein is Mesaconyl-CoA hydratase of Haloarcula hispanica (strain ATCC 33960 / DSM 4426 / JCM 8911 / NBRC 102182 / NCIMB 2187 / VKM B-1755).